The following is a 317-amino-acid chain: Cell division protein FtsQ (317 aa).

Residues 1 to 63 (MDGGGRFVFA…RIHIPAHTGT (63 aa)) are Cytoplasmic-facing. The helical transmembrane segment at 64-82 (ISAVAFYAMIGLYGMSLGG) threads the bilayer. The Periplasmic segment spans residues 83–317 (HTNIVTQTTT…KALKKAEKNT (235 aa)). The region spanning 97–165 (FAVEDVKVSG…KTVEVRLKER (69 aa)) is the POTRA domain.

The protein belongs to the FtsQ/DivIB family. FtsQ subfamily.

It localises to the cell inner membrane. In terms of biological role, essential cell division protein. The sequence is that of Cell division protein FtsQ from Agrobacterium fabrum (strain C58 / ATCC 33970) (Agrobacterium tumefaciens (strain C58)).